Reading from the N-terminus, the 180-residue chain is Putative 3-methyladenine DNA glycosylase (180 aa).

It belongs to the DNA glycosylase MPG family.

This chain is Putative 3-methyladenine DNA glycosylase, found in Ehrlichia chaffeensis (strain ATCC CRL-10679 / Arkansas).